A 186-amino-acid chain; its full sequence is MGRYAREPDNATKSCKSRGSHLRVHFKNTHEAANAIKHMPLRRAQRFLKNVVEKKECVPFRRFNGGVGRCAQAKQWKTTQGRWPKKSAEFLLQLLRNAESNADYKGLDVDRLVIDHIQVNRAPCLRRRTYRAHGRINPYMSSPCHIEVILTEKEEVVAKATDEEPTKKKLSKKKLQRQKEKMMRSE.

The tract at residues 159–186 is disordered; sequence KATDEEPTKKKLSKKKLQRQKEKMMRSE. Residues 177–186 show a composition bias toward basic and acidic residues; sequence RQKEKMMRSE.

Belongs to the universal ribosomal protein uL22 family.

This is Large ribosomal subunit protein uL22 (RpL17) from Phlebotomus papatasi (Sandfly).